Here is a 275-residue protein sequence, read N- to C-terminus: 3-methyl-2-oxobutanoate hydroxymethyltransferase (275 aa).

Mg(2+)-binding residues include Asp-44 and Asp-83. 3-methyl-2-oxobutanoate-binding positions include 44-45, Asp-83, and Lys-113; that span reads DS. A Mg(2+)-binding site is contributed by Glu-115. Glu-182 acts as the Proton acceptor in catalysis.

Belongs to the PanB family. In terms of assembly, homodecamer; pentamer of dimers. The cofactor is Mg(2+).

It localises to the cytoplasm. The catalysed reaction is 3-methyl-2-oxobutanoate + (6R)-5,10-methylene-5,6,7,8-tetrahydrofolate + H2O = 2-dehydropantoate + (6S)-5,6,7,8-tetrahydrofolate. The protein operates within cofactor biosynthesis; (R)-pantothenate biosynthesis; (R)-pantoate from 3-methyl-2-oxobutanoate: step 1/2. In terms of biological role, catalyzes the reversible reaction in which hydroxymethyl group from 5,10-methylenetetrahydrofolate is transferred onto alpha-ketoisovalerate to form ketopantoate. The polypeptide is 3-methyl-2-oxobutanoate hydroxymethyltransferase (Clostridium novyi (strain NT)).